The following is a 72-amino-acid chain: MKNSESLKEFKKLNSDQITEKIGQLRKDLFELRFKQATRQLNETHKFKIIKKQVAQLLTLSKTQSASKTTSD.

It belongs to the universal ribosomal protein uL29 family.

In Prochlorococcus marinus (strain MIT 9301), this protein is Large ribosomal subunit protein uL29.